A 78-amino-acid polypeptide reads, in one-letter code: Large ribosomal subunit protein bL28 (78 aa).

It belongs to the bacterial ribosomal protein bL28 family.

This chain is Large ribosomal subunit protein bL28, found in Prochlorococcus marinus (strain SARG / CCMP1375 / SS120).